A 1012-amino-acid chain; its full sequence is PHD finger protein 20 (1012 aa).

2 Tudor domains span residues 4-69 (HPPN…RPLE) and 83-147 (GSSE…GNAR). The segment at 142–336 (IVGNARPKET…RSSRLSTNGT (195 aa)) is disordered. The segment covering 147–245 (RPKETDHKSL…QVDKKPENDI (99 aa)) has biased composition (basic and acidic residues). At Ser159 the chain carries Phosphoserine. The segment at residues 257–269 (KRKRGRPPSIAPT) is a DNA-binding region (a.T hook). Positions 271-280 (VDSNSQTLQP) are enriched in polar residues. Basic and acidic residues predominate over residues 297 to 325 (PLKRPRLDKNSSQEKSKNYSENTDKDLSR). The C2H2-type zinc finger occupies 452-477 (FRCKVVDCLKFFRKAKLLHYHMKYFH). The span at 481–490 (KSLEPEESPG) shows a compositional bias: basic and acidic residues. Positions 481-611 (KSLEPEESPG…KGKVKALEED (131 aa)) are disordered. Ser488 is modified (phosphoserine). Over residues 497 to 509 (RGPSASDKPSQET) the composition is skewed to polar residues. Residues 522–538 (TKDKEKNKEKKFKEFVR) are compositionally biased toward basic and acidic residues. Over residues 539 to 551 (VKPKKKKKKKKKT) the composition is skewed to basic residues. The PHD-type zinc finger occupies 654-700 (RCICEVQEENDFMIQCEECQCWQHGVCMGLLEENVPEKYTCYVCQDP). Lys843 bears the N6-acetyllysine mark. The interval 866–912 (DAVNPLHENGDDSLSPRLGWPLDQDRSKGDSDPKPGSPKVKEYVSKK) is disordered. Phosphoserine is present on residues Ser878 and Ser880. Residues 888-912 (DQDRSKGDSDPKPGSPKVKEYVSKK) show a composition bias toward basic and acidic residues.

As to quaternary structure, homodimer; disulfide-linked. Component of some MLL1/MLL complex, at least composed of the core components KMT2A/MLL1, ASH2L, HCFC1, WDR5 and RBBP5, as well as the facultative components BACC1, CHD8, E2F6, HSP70, INO80C, KANSL1, LAS1L, MAX, MCRS1, MGA, KAT8/MOF, PELP1, PHF20, PRP31, RING2, RUVB1/TIP49A, RUVB2/TIP49B, SENP3, TAF1, TAF4, TAF6, TAF7, TAF9 and TEX10. Component of the NSL complex at least composed of MOF/KAT8, KANSL1, KANSL2, KANSL3, MCRS1, PHF20, OGT1/OGT, WDR5 and HCFC1. Post-translationally, ubiquitinated by TRIM26; leading to proteasomal degradation. Expressed in heart, kidney, liver, lung, pancreas, placenta, spleen and testis. Not expressed in brain, skeletal muscle, colon, ovary, prostate, small intestine and thymus. Expressed in colon and ovary cancer cell lines while it is not expressed in the respective normal tissues.

Its subcellular location is the nucleus. In terms of biological role, methyllysine-binding protein, component of the MOF histone acetyltransferase protein complex. Not required for maintaining the global histone H4 'Lys-16' acetylation (H4K16ac) levels or locus specific histone acetylation, but instead works downstream in transcriptional regulation of MOF target genes. As part of the NSL complex it may be involved in acetylation of nucleosomal histone H4 on several lysine residues. Contributes to methyllysine-dependent p53/TP53 stabilization and up-regulation after DNA damage. This is PHD finger protein 20 (PHF20) from Homo sapiens (Human).